Here is a 65-residue protein sequence, read N- to C-terminus: UPF0434 protein Mpe_A2486 (65 aa).

It belongs to the UPF0434 family.

This is UPF0434 protein Mpe_A2486 from Methylibium petroleiphilum (strain ATCC BAA-1232 / LMG 22953 / PM1).